Reading from the N-terminus, the 37-residue chain is GKFSGFAKILKSIAKFFKGVGKVRKQFKEASDLDKNQ.

In terms of tissue distribution, expressed by the venom gland.

It localises to the secreted. Disrupts biological membranes, particularly those rich in phosphocholine. Has antimicrobial activity against Gram-negative bacterium E.coli, Gram-positive bacteria B.subtilis and S.aureus, and hemolytic activity against sheep, pig and guinea pig red blood cells. Has insecticidal activity against S.frugiperda ovarian cells by opening non-selective ion channels. Enhances the insecticidal activity of spider venom neurotoxic peptides. This chain is M-oxotoxin-Ot2b, found in Oxyopes takobius (Lynx spider).